Here is a 206-residue protein sequence, read N- to C-terminus: Ribosomal RNA large subunit methyltransferase E (206 aa).

S-adenosyl-L-methionine contacts are provided by G60, W62, D80, D96, and D121. The active-site Proton acceptor is the K161.

Belongs to the class I-like SAM-binding methyltransferase superfamily. RNA methyltransferase RlmE family.

Its subcellular location is the cytoplasm. It catalyses the reaction uridine(2552) in 23S rRNA + S-adenosyl-L-methionine = 2'-O-methyluridine(2552) in 23S rRNA + S-adenosyl-L-homocysteine + H(+). Specifically methylates the uridine in position 2552 of 23S rRNA at the 2'-O position of the ribose in the fully assembled 50S ribosomal subunit. The protein is Ribosomal RNA large subunit methyltransferase E of Legionella pneumophila (strain Paris).